Here is a 186-residue protein sequence, read N- to C-terminus: LIM domain-containing protein DDB_G0271356 (186 aa).

LIM zinc-binding domains follow at residues 7-67 (PECY…DKFA), 68-127 (PKCQ…KIGF), and 128-186 (LCRH…KLYG).

The protein is LIM domain-containing protein DDB_G0271356 of Dictyostelium discoideum (Social amoeba).